The chain runs to 294 residues: Ribosomal protein L11 methyltransferase (294 aa).

Thr-144, Gly-165, Asp-187, and Asn-229 together coordinate S-adenosyl-L-methionine.

It belongs to the methyltransferase superfamily. PrmA family.

It is found in the cytoplasm. The catalysed reaction is L-lysyl-[protein] + 3 S-adenosyl-L-methionine = N(6),N(6),N(6)-trimethyl-L-lysyl-[protein] + 3 S-adenosyl-L-homocysteine + 3 H(+). Its function is as follows. Methylates ribosomal protein L11. The sequence is that of Ribosomal protein L11 methyltransferase from Cellvibrio japonicus (strain Ueda107) (Pseudomonas fluorescens subsp. cellulosa).